Here is a 1494-residue protein sequence, read N- to C-terminus: Serine/threonine-protein kinase VPS15 (1494 aa).

Glycine 2 carries the N-myristoyl glycine lipid modification. One can recognise a Protein kinase domain in the interval 27 to 307; it reads LVLKEVLGRG…VFPNYFSPFL (281 aa). ATP contacts are provided by residues 33–41 and lysine 54; that span reads LGRGRFLKS. Catalysis depends on aspartate 149, which acts as the Proton acceptor. HEAT repeat units follow at residues 383–421, 480–517, 524–562, 610–646, 648–685, 687–724, and 727–764; these read NSKD…LYDS, DRLQ…LVRD, KIFP…TAYG, KTIA…FFGQ, QSND…FVGQ, SVEE…SSFL, and RALL…CLGA. Disordered stretches follow at residues 859-903 and 1037-1064; these read QSVE…TVEL and SASV…SVPD. A compositionally biased stretch (low complexity) spans 1037–1047; it reads SASVTSEDASS. WD repeat units follow at residues 1079 to 1118, 1127 to 1166, 1184 to 1226, 1231 to 1270, 1276 to 1323, 1371 to 1409, and 1466 to 1494; these read EHRS…KDIS, LEGS…RGLG, KEGA…DAWT, PEEG…PVNS, ICPI…CHQV, PRLP…RSYC, and DSVQ…KVWK.

The protein belongs to the protein kinase superfamily. Ser/Thr protein kinase family. In terms of assembly, interacts with VPS34. Component of a complex made of VPS38/USL1 and PI3K main subunits such as VPS15, ATG6/VPS30 and VPS34. In terms of processing, autophosphorylated. As to expression, mainly expressed in anthers, pollen grains and pollen tubes, and, to a lower extent, in other tissues and organs including seedlings, roots, stems, leaves, flowers, pitils and siliques.

Its subcellular location is the cytoplasm. It localises to the golgi apparatus. The protein localises to the trans-Golgi network membrane. It is found in the endosome membrane. It catalyses the reaction L-seryl-[protein] + ATP = O-phospho-L-seryl-[protein] + ADP + H(+). The catalysed reaction is L-threonyl-[protein] + ATP = O-phospho-L-threonyl-[protein] + ADP + H(+). Serine/threonine-protein kinase required for cytoplasm to vacuole transport (Cvt) and autophagy as a part of the autophagy-specific VPS34 PI3-kinase complex I. Required for pollen development and germination, probably via the modulation of phosphatidylinositol 3-phosphate (PI3P) formation and vacuolar organization. The protein is Serine/threonine-protein kinase VPS15 of Arabidopsis thaliana (Mouse-ear cress).